The sequence spans 271 residues: L-aspartate dehydrogenase (271 aa).

2 residues coordinate NAD(+): Ala-124 and Asn-192. The active site involves His-222.

It belongs to the L-aspartate dehydrogenase family.

The enzyme catalyses L-aspartate + NADP(+) + H2O = oxaloacetate + NH4(+) + NADPH + H(+). It carries out the reaction L-aspartate + NAD(+) + H2O = oxaloacetate + NH4(+) + NADH + H(+). The protein operates within cofactor biosynthesis; NAD(+) biosynthesis; iminoaspartate from L-aspartate (dehydrogenase route): step 1/1. Specifically catalyzes the NAD or NADP-dependent dehydrogenation of L-aspartate to iminoaspartate. This Methanosarcina barkeri (strain Fusaro / DSM 804) protein is L-aspartate dehydrogenase.